The sequence spans 314 residues: L-lactate dehydrogenase 2 (314 aa).

Residues valine 16, aspartate 37, lysine 42, tyrosine 68, and 82–83 (GL) contribute to the NAD(+) site. Substrate is bound by residues glutamine 85, arginine 91, and 123 to 126 (NPVD). Residues 121–123 (ATN) and serine 146 each bind NAD(+). Substrate is bound at residue 151–154 (DSAR). Beta-D-fructose 1,6-bisphosphate is bound by residues arginine 156 and histidine 171. Residue histidine 178 is the Proton acceptor of the active site. A Phosphotyrosine modification is found at tyrosine 223. Threonine 232 provides a ligand contact to substrate.

The protein belongs to the LDH/MDH superfamily. LDH family. In terms of assembly, homotetramer.

Its subcellular location is the cytoplasm. It catalyses the reaction (S)-lactate + NAD(+) = pyruvate + NADH + H(+). The protein operates within fermentation; pyruvate fermentation to lactate; (S)-lactate from pyruvate: step 1/1. With respect to regulation, allosterically activated by fructose 1,6-bisphosphate (FBP). Functionally, catalyzes the conversion of lactate to pyruvate. This Bacillus anthracis protein is L-lactate dehydrogenase 2.